We begin with the raw amino-acid sequence, 334 residues long: Geranylgeranyl pyrophosphate synthase idtG (334 aa).

Residues lysine 49, arginine 52, and histidine 81 each coordinate isopentenyl diphosphate. Residues aspartate 88 and aspartate 92 each contribute to the Mg(2+) site. Arginine 97 contributes to the dimethylallyl diphosphate binding site. Arginine 98 is an isopentenyl diphosphate binding site. Dimethylallyl diphosphate is bound by residues lysine 175, threonine 176, and glutamine 209. Aspartate 212 contacts Mg(2+). 3 residues coordinate dimethylallyl diphosphate: asparagine 216, lysine 226, and lysine 236.

This sequence belongs to the FPP/GGPP synthase family. Mg(2+) serves as cofactor.

The catalysed reaction is isopentenyl diphosphate + dimethylallyl diphosphate = (2E)-geranyl diphosphate + diphosphate. It carries out the reaction isopentenyl diphosphate + (2E)-geranyl diphosphate = (2E,6E)-farnesyl diphosphate + diphosphate. The enzyme catalyses isopentenyl diphosphate + (2E,6E)-farnesyl diphosphate = (2E,6E,10E)-geranylgeranyl diphosphate + diphosphate. It participates in secondary metabolite biosynthesis. Its function is as follows. Geranylgeranyl pyrophosphate synthase; part of the gene cluster that mediates the biosynthesis of paspalitrems, indole-diterpene (IDT) mycotoxins that are potent tremorgens in mammals. The geranylgeranyl diphosphate (GGPP) synthase idtG is proposed to catalyze the first step in IDT biosynthesis via catalysis of a series of iterative condensations of isopentenyl diphosphate (IPP) with dimethylallyl diphosphate (DMAPP), geranyl diphosphate (GPP), and farnesyl diphosphate (FPP), to form GGPP. Condensation of indole-3-glycerol phosphate with GGPP by the prenyltransferase idtC then forms 3-geranylgeranylindole (3-GGI). Epoxidation of the two terminal alkenes of the geranylgeranyl moiety by the FAD-dependent monooxygenase idtM, and cyclization by the terpene cyclase idtB then leads to the production of paspaline. The cytochrome P450 monooxygenase idtP then catalyzes oxidative elimination of the pendant methyl group at C-12 of paspaline and generates the C-10 ketone to yield 13-desoxypaxilline. The cytochrome P450 monooxygenase idtQ may catalyze the C-13 oxidation of 13-desoxypaxilline to afford paxilline. Considering that both paspalicine and paxilline were detected in C.paspali, idtQ also catalyzes the formation of paspalinine from 13-desoxypaxilline via paspalicine as an intermediate. Finally, the alpha-prenyltransferase idtF prenylates paspalinine at the C-20 or the C-21 positions to yield paspalitrems A and C, respectively. The hydroxylation of paspalitrem A at C-32 by a still unknown oxidase affords paspalitrem B. The polypeptide is Geranylgeranyl pyrophosphate synthase idtG (Claviceps paspali (Rye ergot fungus)).